Consider the following 125-residue polypeptide: Photoactive yellow protein (125 aa).

The PAS domain maps to 23–86 (IDDLAFGAIQ…GRFREGVANG (64 aa)). Cys-69 carries the post-translational modification S-(4-hydroxycinnamyl)cysteine.

Belongs to the photoactive yellow protein family. Post-translationally, the 4-hydroxycinnamic acid (p-coumaric acid) chromophore is covalently bound via a thioester linkage.

Functionally, this photoactive protein is a photoreceptor with kinetics similar to that of rhodopsin. This Rhodothalassium salexigens (Rhodospirillum salexigens) protein is Photoactive yellow protein (pyp).